Consider the following 252-residue polypeptide: Expansin-A12 (252 aa).

An N-terminal signal peptide occupies residues 1–23 (MDMKGTYLVTVILLVSTLSVGMC). Positions 45–156 (GGACGYDNPY…RRVGCKRRGG (112 aa)) constitute an Expansin-like EG45 domain. Residues 166–246 (NFNMVMISNV…SWWFGQTFSS (81 aa)) enclose the Expansin-like CBD domain.

Belongs to the expansin family. Expansin A subfamily.

It localises to the secreted. The protein localises to the cell wall. It is found in the membrane. Causes loosening and extension of plant cell walls by disrupting non-covalent bonding between cellulose microfibrils and matrix glucans. No enzymatic activity has been found. This is Expansin-A12 (EXPA12) from Arabidopsis thaliana (Mouse-ear cress).